An 88-amino-acid chain; its full sequence is Small ribosomal subunit protein uS17 (88 aa).

Belongs to the universal ribosomal protein uS17 family. As to quaternary structure, part of the 30S ribosomal subunit.

In terms of biological role, one of the primary rRNA binding proteins, it binds specifically to the 5'-end of 16S ribosomal RNA. This is Small ribosomal subunit protein uS17 from Prochlorococcus marinus (strain MIT 9515).